The sequence spans 91 residues: Early E3B 10.4 kDa protein (91 aa).

Residues 1-22 (MIPRVLILLTLVALFCACSTLA) form the signal peptide. The Lumenal portion of the chain corresponds to 23-34 (AVAHIEVDCIPP). The helical transmembrane segment at 35 to 60 (FTVYLLYGFVTLILICSLVTVVIAFI) threads the bilayer. The Cytoplasmic segment spans residues 61–91 (QFIDWICVRIAYLRHHPQYRDRTIADLLRIL).

The protein belongs to the adenoviridae E3B family.

Its subcellular location is the host endoplasmic reticulum membrane. Functionally, down-regulates the EGF receptor. This Homo sapiens (Human) protein is Early E3B 10.4 kDa protein.